The following is a 230-amino-acid chain: Ribonuclease 3 (230 aa).

Positions Met-1–Gly-134 constitute an RNase III domain. Glu-47 is a Mg(2+) binding site. The active site involves Asp-51. Mg(2+) is bound by residues Asp-120 and Glu-123. Glu-123 is an active-site residue. The 70-residue stretch at Asp-160 to Glu-229 folds into the DRBM domain.

This sequence belongs to the ribonuclease III family. As to quaternary structure, homodimer. The cofactor is Mg(2+).

The protein localises to the cytoplasm. It catalyses the reaction Endonucleolytic cleavage to 5'-phosphomonoester.. Digests double-stranded RNA. Involved in the processing of primary rRNA transcript to yield the immediate precursors to the large and small rRNAs (23S and 16S). Processes some mRNAs, and tRNAs when they are encoded in the rRNA operon. Processes pre-crRNA and tracrRNA of type II CRISPR loci if present in the organism. The protein is Ribonuclease 3 of Streptococcus pyogenes serotype M2 (strain MGAS10270).